The primary structure comprises 550 residues: M-phase inducer phosphatase 1-B (550 aa).

Disordered stretches follow at residues 76–98 and 285–335; these read NLGD…GKVE and SPSM…QRRG. A compositionally biased stretch (basic and acidic residues) spans 290-310; that stretch reads EKLDRPMLKRPVRPLDSETPV. Positions 322–335 are enriched in polar residues; the sequence is LQPQEENFQPQRRG. The 108-residue stretch at 401–508 folds into the Rhodanese domain; that stretch reads LVEKIFIIDC…FFPEYKELCE (108 aa). The active site involves cysteine 457.

The protein belongs to the MPI phosphatase family.

It carries out the reaction O-phospho-L-tyrosyl-[protein] + H2O = L-tyrosyl-[protein] + phosphate. Its function is as follows. Tyrosine protein phosphatase which functions as a dosage-dependent inducer of mitotic progression. Directly dephosphorylates CDK1 and stimulates its kinase activity. The polypeptide is M-phase inducer phosphatase 1-B (cdc25-1-b) (Xenopus laevis (African clawed frog)).